The primary structure comprises 304 residues: Probable WRKY transcription factor 13 (304 aa).

Residues 141–190 are disordered; sequence QKNNHGSEIDVDDNDDEVGDGGGINDDDNGRHHHHDTPSRHDKHNTASLG. Positions 149–159 are enriched in acidic residues; the sequence is IDVDDNDDEVG. The segment at residues 217–282 is a DNA-binding region (WRKY); the sequence is SEVDVLDDGY…YEGRHLHSPS (66 aa).

The protein belongs to the WRKY group II-c family.

It localises to the nucleus. In terms of biological role, transcription factor. Interacts specifically with the W box (5'-(T)TGAC[CT]-3'), a frequently occurring elicitor-responsive cis-acting element. This Arabidopsis thaliana (Mouse-ear cress) protein is Probable WRKY transcription factor 13 (WRKY13).